Reading from the N-terminus, the 351-residue chain is Snurportin-1 (351 aa).

Disordered stretches follow at residues 1 to 66 (MESS…QKGI) and 294 to 322 (EQKK…EYDS). The span at 8-42 (LYKKGLDIGEQQKQRQKELLKQQKLRRQQEQDDYR) shows a compositional bias: basic and acidic residues. The segment covering 52–62 (PRKKSGKRSGH) has biased composition (basic residues). Residues 274–330 (VLQYMDAFEQKLAEHRRTLKEQKKKVNEQKEDPHTMEAEEDVESDEYDSLKRVLDQQ) are a coiled coil. Residues 294–310 (EQKKKVNEQKEDPHTME) are compositionally biased toward basic and acidic residues. The segment covering 311–320 (AEEDVESDEY) has biased composition (acidic residues).

Belongs to the snurportin family. Interacts with components of the snRNP complex including SmB and Smn; these interactions are RNA-dependent. Interacts with importin-7 msk but not with importin subunit beta Fs(2)Ket; the interaction is RNA-dependent.

It localises to the nucleus. The protein localises to the cytoplasm. It is found in the U-body. Its subcellular location is the nucleus speckle. The protein resides in the cajal body. Functions as an U snRNP-specific nuclear import adapter. Involved in the trimethylguanosine (m3G)-cap-dependent nuclear import of U snRNPs. Binds specifically to the terminal m3G-cap U snRNAs. In Drosophila melanogaster (Fruit fly), this protein is Snurportin-1.